The sequence spans 371 residues: Bifunctional enzyme IspD/IspF (371 aa).

The interval 1–212 (MKDITLVLLA…FDFTPASGTI (212 aa)) is 2-C-methyl-D-erythritol 4-phosphate cytidylyltransferase. The tract at residues 213–371 (FTGNGFDVHA…NLGYFDWRKF (159 aa)) is 2-C-methyl-D-erythritol 2,4-cyclodiphosphate synthase. A divalent metal cation contacts are provided by Asp-219 and His-221. Residues 219–221 (DVH) and 245–246 (HS) each bind 4-CDP-2-C-methyl-D-erythritol 2-phosphate. His-253 provides a ligand contact to a divalent metal cation. 4-CDP-2-C-methyl-D-erythritol 2-phosphate-binding positions include 267–269 (DIG), 272–276 (FPDTD), 341–344 (STTE), Phe-348, and Arg-351.

This sequence in the N-terminal section; belongs to the IspD/TarI cytidylyltransferase family. IspD subfamily. The protein in the C-terminal section; belongs to the IspF family. A divalent metal cation serves as cofactor.

It carries out the reaction 2-C-methyl-D-erythritol 4-phosphate + CTP + H(+) = 4-CDP-2-C-methyl-D-erythritol + diphosphate. It catalyses the reaction 4-CDP-2-C-methyl-D-erythritol 2-phosphate = 2-C-methyl-D-erythritol 2,4-cyclic diphosphate + CMP. It participates in isoprenoid biosynthesis; isopentenyl diphosphate biosynthesis via DXP pathway; isopentenyl diphosphate from 1-deoxy-D-xylulose 5-phosphate: step 2/6. Its pathway is isoprenoid biosynthesis; isopentenyl diphosphate biosynthesis via DXP pathway; isopentenyl diphosphate from 1-deoxy-D-xylulose 5-phosphate: step 4/6. Its function is as follows. Bifunctional enzyme that catalyzes the formation of 4-diphosphocytidyl-2-C-methyl-D-erythritol from CTP and 2-C-methyl-D-erythritol 4-phosphate (MEP) (IspD), and catalyzes the conversion of 4-diphosphocytidyl-2-C-methyl-D-erythritol 2-phosphate (CDP-ME2P) to 2-C-methyl-D-erythritol 2,4-cyclodiphosphate (ME-CPP) with a corresponding release of cytidine 5-monophosphate (CMP) (IspF). The protein is Bifunctional enzyme IspD/IspF of Campylobacter hominis (strain ATCC BAA-381 / DSM 21671 / CCUG 45161 / LMG 19568 / NCTC 13146 / CH001A).